A 232-amino-acid chain; its full sequence is MAIDLLSTFIKPMHREGTKFVAIFAVVTLVLFLIWEPLGWIGVGLTVWCYYFFRDPVRVTPTREGLIVSPADGVVSLIEPAVPPAELGMGPAPMTRVSVFMNVFDCHVNRAPIGGTVTAVAYRPGKFLNASLDKASEDNERNALAIRLADGRQIAVVQIAGLVARRILCEVREGTPLLTGERFGMIRFGSRLDVYLPEGVQPLVCLGQVMTSGETVLADLASPEARRTGAAR.

Catalysis depends on serine 190, which acts as the Schiff-base intermediate with substrate; via pyruvic acid. Residue serine 190 is modified to Pyruvic acid (Ser); by autocatalysis.

This sequence belongs to the phosphatidylserine decarboxylase family. PSD-A subfamily. In terms of assembly, heterodimer of a large membrane-associated beta subunit and a small pyruvoyl-containing alpha subunit. It depends on pyruvate as a cofactor. Post-translationally, is synthesized initially as an inactive proenzyme. Formation of the active enzyme involves a self-maturation process in which the active site pyruvoyl group is generated from an internal serine residue via an autocatalytic post-translational modification. Two non-identical subunits are generated from the proenzyme in this reaction, and the pyruvate is formed at the N-terminus of the alpha chain, which is derived from the carboxyl end of the proenzyme. The post-translation cleavage follows an unusual pathway, termed non-hydrolytic serinolysis, in which the side chain hydroxyl group of the serine supplies its oxygen atom to form the C-terminus of the beta chain, while the remainder of the serine residue undergoes an oxidative deamination to produce ammonia and the pyruvoyl prosthetic group on the alpha chain.

It localises to the cell membrane. It carries out the reaction a 1,2-diacyl-sn-glycero-3-phospho-L-serine + H(+) = a 1,2-diacyl-sn-glycero-3-phosphoethanolamine + CO2. The protein operates within phospholipid metabolism; phosphatidylethanolamine biosynthesis; phosphatidylethanolamine from CDP-diacylglycerol: step 2/2. Functionally, catalyzes the formation of phosphatidylethanolamine (PtdEtn) from phosphatidylserine (PtdSer). In Cereibacter sphaeroides (strain ATCC 17023 / DSM 158 / JCM 6121 / CCUG 31486 / LMG 2827 / NBRC 12203 / NCIMB 8253 / ATH 2.4.1.) (Rhodobacter sphaeroides), this protein is Phosphatidylserine decarboxylase proenzyme.